We begin with the raw amino-acid sequence, 269 residues long: 3'(2'),5'-bisphosphate nucleotidase CysQ (269 aa).

Residues Glu-69, Asp-89, Leu-91, Asp-92, and Asp-216 each coordinate Mg(2+). Glu-69 lines the substrate pocket. Residues 91–94 and Asp-216 contribute to the substrate site; that span reads LDGT.

It belongs to the inositol monophosphatase superfamily. CysQ family. It depends on Mg(2+) as a cofactor.

The protein resides in the cell inner membrane. The enzyme catalyses adenosine 3',5'-bisphosphate + H2O = AMP + phosphate. In terms of biological role, converts adenosine-3',5'-bisphosphate (PAP) to AMP. This Aggregatibacter actinomycetemcomitans (Actinobacillus actinomycetemcomitans) protein is 3'(2'),5'-bisphosphate nucleotidase CysQ.